The sequence spans 149 residues: D-aminoacyl-tRNA deacylase (149 aa).

Positions 137–138 (GP) match the Gly-cisPro motif, important for rejection of L-amino acids motif.

This sequence belongs to the DTD family. Homodimer.

Its subcellular location is the cytoplasm. The enzyme catalyses glycyl-tRNA(Ala) + H2O = tRNA(Ala) + glycine + H(+). The catalysed reaction is a D-aminoacyl-tRNA + H2O = a tRNA + a D-alpha-amino acid + H(+). An aminoacyl-tRNA editing enzyme that deacylates mischarged D-aminoacyl-tRNAs. Also deacylates mischarged glycyl-tRNA(Ala), protecting cells against glycine mischarging by AlaRS. Acts via tRNA-based rather than protein-based catalysis; rejects L-amino acids rather than detecting D-amino acids in the active site. By recycling D-aminoacyl-tRNA to D-amino acids and free tRNA molecules, this enzyme counteracts the toxicity associated with the formation of D-aminoacyl-tRNA entities in vivo and helps enforce protein L-homochirality. This chain is D-aminoacyl-tRNA deacylase, found in Syntrophotalea carbinolica (strain DSM 2380 / NBRC 103641 / GraBd1) (Pelobacter carbinolicus).